The following is a 189-amino-acid chain: Shikimate kinase (189 aa).

ATP is bound at residue G11 to A16. Mg(2+) is bound at residue S15. Residues D33, R57, and G79 each coordinate substrate. R117 contributes to the ATP binding site. R135 serves as a coordination point for substrate.

It belongs to the shikimate kinase family. In terms of assembly, monomer. Requires Mg(2+) as cofactor.

It localises to the cytoplasm. It carries out the reaction shikimate + ATP = 3-phosphoshikimate + ADP + H(+). The protein operates within metabolic intermediate biosynthesis; chorismate biosynthesis; chorismate from D-erythrose 4-phosphate and phosphoenolpyruvate: step 5/7. Functionally, catalyzes the specific phosphorylation of the 3-hydroxyl group of shikimic acid using ATP as a cosubstrate. In Desulforudis audaxviator (strain MP104C), this protein is Shikimate kinase.